Consider the following 453-residue polypeptide: MDLVIMNFVFLLYLTSVVKCSIKLDFNKVSTPSKYTKRDALPMPLINDKILYTTELEIGSNKDKVSVSIDTGSYDLWVMSNDAVCYKVSEFQTEGAPQLPDIFNDIDQDYSCTFNGTYNSKSSKTFKNTSEDFSIGYVDGSAAQGVWGYDSVQFGQYGVTGLKIGIANRSSVSDGILGIGIANGYDNFPVLLQKQGLINKIAYSVYLNSSNSTTGTILFGAIDHAKYKGALSTVPVDSKSQLSVNVTNLKTKNGNVASGGHSILLDTGSTFSIFPDEWIDALGHSLNATYDEDESVYEIECDGYDEHFFGFSIGDSDFSVPIQDLKTEKDGQCYLAIMSNSVIGGGGILFGDDILRQIYLVYDLQDMTISVAPVVYTEDEDIEEILNPNEDQNEVPTSTSFTQSASSSGSQPSSTISGENMDKNTTSSSSGNCQTRSWIAILSALFLVYIHII.

Positions Met1–Cys20 are cleaved as a signal peptide. The Peptidase A1 domain occupies Tyr52–Ala372. Asp70 is a catalytic residue. Asp70–Gly72 provides a ligand contact to pepstatin A. Cys85 and Cys112 are joined by a disulfide. 2 N-linked (GlcNAc...) asparagine glycosylation sites follow: Asn115 and Asn128. Val138 to Asp139 is a pepstatin A binding site. 4 N-linked (GlcNAc...) asparagine glycosylation sites follow: Asn168, Asn208, Asn211, and Asn245. Asp266 is a catalytic residue. Asp266–Thr270 lines the pepstatin A pocket. N-linked (GlcNAc...) asparagine glycosylation occurs at Asn287. Cys301 and Cys333 are disulfide-bonded. Residues Asn387 to Asn432 form a disordered region. A compositionally biased stretch (low complexity) spans Thr397–Ser417. Positions Lys423 to Asn432 are enriched in polar residues. The N-linked (GlcNAc...) asparagine glycan is linked to Asn424. Ser429 carries the GPI-anchor amidated serine lipid modification. Residues Ser430 to Ile453 constitute a propeptide, removed in mature form.

It belongs to the peptidase A1 family. Post-translationally, the GPI-anchor is attached to the protein in the endoplasmic reticulum and serves to target the protein to the cell surface. There, the glucosamine-inositol phospholipid moiety is cleaved off and the GPI-modified mannoprotein is covalently attached via its lipidless GPI glycan remnant to the 1,6-beta-glucan of the outer cell wall layer.

It localises to the secreted. The protein resides in the cell membrane. The enzyme catalyses Preferential cleavage at the carboxyl of hydrophobic amino acids, but fails to cleave 15-Leu-|-Tyr-16, 16-Tyr-|-Leu-17 and 24-Phe-|-Phe-25 of insulin B chain. Activates trypsinogen, and degrades keratin.. Secreted aspartic peptidases (SAPs) are a group of ten acidic hydrolases considered as key virulence factors. These enzymes supply the fungus with nutrient amino acids as well as are able to degrade the selected host's proteins involved in the immune defense. Required for cell surface integrity and cell separation during budding. In Candida albicans (strain SC5314 / ATCC MYA-2876) (Yeast), this protein is Secreted aspartic protease 10.